Here is a 433-residue protein sequence, read N- to C-terminus: Serine hydroxymethyltransferase (433 aa).

(6S)-5,6,7,8-tetrahydrofolate contacts are provided by residues Leu132 and 136 to 138 (GHL). The residue at position 241 (Lys241) is an N6-(pyridoxal phosphate)lysine.

It belongs to the SHMT family. Homodimer. Pyridoxal 5'-phosphate serves as cofactor.

The protein resides in the cytoplasm. The enzyme catalyses (6R)-5,10-methylene-5,6,7,8-tetrahydrofolate + glycine + H2O = (6S)-5,6,7,8-tetrahydrofolate + L-serine. It functions in the pathway one-carbon metabolism; tetrahydrofolate interconversion. The protein operates within amino-acid biosynthesis; glycine biosynthesis; glycine from L-serine: step 1/1. Its function is as follows. Catalyzes the reversible interconversion of serine and glycine with tetrahydrofolate (THF) serving as the one-carbon carrier. This reaction serves as the major source of one-carbon groups required for the biosynthesis of purines, thymidylate, methionine, and other important biomolecules. Also exhibits THF-independent aldolase activity toward beta-hydroxyamino acids, producing glycine and aldehydes, via a retro-aldol mechanism. This Rhodopseudomonas palustris (strain BisA53) protein is Serine hydroxymethyltransferase.